Reading from the N-terminus, the 314-residue chain is Methylglutaconyl-CoA hydratase, mitochondrial (314 aa).

The transit peptide at 1 to 42 directs the protein to the mitochondrion; the sequence is MAAAAPGALGALRTGRVRLVAACCARLGPAAWARGTAPRRGY. Residue Lys75 is modified to N6-acetyllysine; alternate. Lys75 is subject to N6-succinyllysine; alternate. The interval 80 to 94 is RNA-binding; that stretch reads KNLLKMLSKAVDALK. Lys84 carries the post-translational modification N6-succinyllysine. N6-acetyllysine; alternate occurs at positions 88 and 119. 2 positions are modified to N6-succinyllysine; alternate: Lys88 and Lys119. N6-succinyllysine is present on residues Lys123 and Lys135. N6-acetyllysine; alternate occurs at positions 179 and 186. N6-succinyllysine; alternate occurs at positions 179 and 186. An N6-succinyllysine modification is found at Lys304.

It belongs to the enoyl-CoA hydratase/isomerase family. As to quaternary structure, homohexamer. As to expression, detected in heart, brain, liver, spleen, skeletal muscle and kidney. Expressed in brain, kidney, liver and spleen tissue (at protein level).

Its subcellular location is the mitochondrion. The enzyme catalyses (3S)-3-hydroxy-3-methylglutaryl-CoA = 3-methyl-(2E)-glutaconyl-CoA + H2O. The catalysed reaction is (3S)-citramalyl-CoA = itaconyl-CoA + H2O. It catalyses the reaction 3-hydroxyisovaleryl-CoA = 3-methylbut-2-enoyl-CoA + H2O. It carries out the reaction (S)-3-hydroxyglutaryl-CoA = (2E)-glutaconyl-CoA + H2O. Its pathway is amino-acid degradation; L-leucine degradation; (S)-3-hydroxy-3-methylglutaryl-CoA from 3-isovaleryl-CoA: step 3/3. Functionally, catalyzes the fifth step in the leucine degradation pathway, the reversible hydration of 3-methylglutaconyl-CoA (3-MG-CoA) to 3-hydroxy-3-methylglutaryl-CoA (HMG-CoA). Can catalyze the reverse reaction but at a much lower rate in vitro. HMG-CoA is then quickly degraded by another enzyme (such as HMG-CoA lyase) to give acetyl-CoA and acetoacetate. Uses other substrates such as (2E)-glutaconyl-CoA efficiently in vitro, and to a lesser extent 3-methylcrotonyl-CoA (3-methyl-(2E)-butenoyl-CoA), crotonyl-CoA ((2E)-butenoyl-CoA) and 3-hydroxybutanoyl-CoA (the missing carboxylate reduces affinity to the active site). Originally it was identified as an RNA-binding protein as it binds to AU-rich elements (AREs) in vitro. AREs direct rapid RNA degradation and mRNA deadenylation. Might have itaconyl-CoA hydratase activity, converting itaconyl-CoA into citramalyl-CoA in the C5-dicarboxylate catabolism pathway. The C5-dicarboxylate catabolism pathway is required to detoxify itaconate, an antimicrobial metabolite and immunomodulator produced by macrophages during certain infections, that can act as a vitamin B12-poisoning metabolite. The sequence is that of Methylglutaconyl-CoA hydratase, mitochondrial (Auh) from Mus musculus (Mouse).